The following is a 2273-amino-acid chain: Acetyl-CoA carboxylase, mitochondrial (2273 aa).

Residues 1 to 104 (KGKTITHGQS…RGNIHKHTRL (104 aa)) constitute a mitochondrion transit peptide. Positions 134–635 (VISKILIANN…STGWLDDLIL (502 aa)) constitute a Biotin carboxylation domain. The ATP-grasp domain occupies 292–484 (KTNFVSVPDD…LPATQLQIAM (193 aa)). 332–337 (GGGGKG) contacts ATP. Arginine 459 is a catalytic residue. Residues 763-837 (LEAELNPTQV…EAGDVIAKLT (75 aa)) enclose the Biotinyl-binding domain. Lysine 804 is subject to N6-biotinyllysine. The CoA carboxyltransferase N-terminal domain maps to 1532–1867 (PYSVKDWLQP…KRDMSPPLLE (336 aa)). The segment at 1532-2187 (PYSVKDWLQP…EGQVIKRLQK (656 aa)) is carboxyltransferase. Positions 1776, 2080, and 2082 each coordinate CoA. Residues 1871–2187 (RWDRDVDFKP…EGQVIKRLQK (317 aa)) form the CoA carboxyltransferase C-terminal domain.

Biotin serves as cofactor.

Its subcellular location is the mitochondrion. It carries out the reaction hydrogencarbonate + acetyl-CoA + ATP = malonyl-CoA + ADP + phosphate + H(+). It catalyses the reaction N(6)-biotinyl-L-lysyl-[protein] + hydrogencarbonate + ATP = N(6)-carboxybiotinyl-L-lysyl-[protein] + ADP + phosphate + H(+). It functions in the pathway lipid metabolism; malonyl-CoA biosynthesis; malonyl-CoA from acetyl-CoA: step 1/1. Its function is as follows. Catalyzes the rate-limiting reaction in the mitochondrial fatty acid synthesis (FAS) type II pathway. Responsible for the production of the mitochondrial malonyl-CoA, used for the biosynthesis of the cofactor lipoic acid. This protein carries three functions: biotin carboxyl carrier protein, biotin carboxylase, and carboxyltransferase. The protein is Acetyl-CoA carboxylase, mitochondrial (HFA1) of Saccharomyces cerevisiae (strain ATCC 204508 / S288c) (Baker's yeast).